The sequence spans 185 residues: Ribosome-recycling factor (185 aa).

This sequence belongs to the RRF family.

It localises to the cytoplasm. Responsible for the release of ribosomes from messenger RNA at the termination of protein biosynthesis. May increase the efficiency of translation by recycling ribosomes from one round of translation to another. The protein is Ribosome-recycling factor of Clostridium botulinum (strain Alaska E43 / Type E3).